The chain runs to 399 residues: Elongation factor Tu (399 aa).

The 198-residue stretch at 10–207 folds into the tr-type G domain; the sequence is KPHMNVGTIG…AMDTYFPDPV (198 aa). The tract at residues 19-26 is G1; sequence GQIDHGKT. Residue 19 to 26 coordinates GTP; it reads GQIDHGKT. Threonine 26 is a binding site for Mg(2+). A G2 region spans residues 60 to 64; sequence GITIN. The interval 81–84 is G3; it reads DCPG. GTP contacts are provided by residues 81–85 and 136–139; these read DCPGH and NKVD. Positions 136 to 139 are G4; the sequence is NKVD. The G5 stretch occupies residues 173-175; the sequence is SAL.

This sequence belongs to the TRAFAC class translation factor GTPase superfamily. Classic translation factor GTPase family. EF-Tu/EF-1A subfamily. Monomer.

The protein resides in the cytoplasm. It carries out the reaction GTP + H2O = GDP + phosphate + H(+). Its function is as follows. GTP hydrolase that promotes the GTP-dependent binding of aminoacyl-tRNA to the A-site of ribosomes during protein biosynthesis. The protein is Elongation factor Tu of Fervidobacterium islandicum.